We begin with the raw amino-acid sequence, 503 residues long: Lysine--tRNA ligase (503 aa).

Mg(2+)-binding residues include glutamate 412 and glutamate 419.

This sequence belongs to the class-II aminoacyl-tRNA synthetase family. Homodimer. Mg(2+) is required as a cofactor.

It localises to the cytoplasm. It catalyses the reaction tRNA(Lys) + L-lysine + ATP = L-lysyl-tRNA(Lys) + AMP + diphosphate. The protein is Lysine--tRNA ligase of Buchnera aphidicola subsp. Schizaphis graminum (strain Sg).